We begin with the raw amino-acid sequence, 80 residues long: Defensin-like protein 16 (80 aa).

The signal sequence occupies residues 1-29 (MAKFASIITLIFAALVLFAAFDAPAMVEA). Gln30 is subject to Pyrrolidone carboxylic acid. 4 disulfides stabilise this stretch: Cys33/Cys80, Cys44/Cys65, Cys50/Cys74, and Cys54/Cys76.

Belongs to the DEFL family. Predominantly expressed in leaves.

Its subcellular location is the secreted. Functionally, confers broad-spectrum resistance to pathogens. Has antifungal activity in vitro. This chain is Defensin-like protein 16 (PDF1.2A), found in Arabidopsis thaliana (Mouse-ear cress).